The following is a 624-amino-acid chain: Chaperone protein HtpG (624 aa).

The segment at 1 to 336 (MKGQETRGFQ…SSDLPLNVSR (336 aa)) is a; substrate-binding. Residues 337–552 (EILQDSTVTR…ADEMSTQMAK (216 aa)) form a b region. A c region spans residues 553–624 (LFAAAGQKVP…IRRMNQLLVS (72 aa)).

The protein belongs to the heat shock protein 90 family. In terms of assembly, homodimer.

Its subcellular location is the cytoplasm. Its function is as follows. Molecular chaperone. Has ATPase activity. The polypeptide is Chaperone protein HtpG (Escherichia coli O1:K1 / APEC).